Here is a 96-residue protein sequence, read N- to C-terminus: Co-chaperonin GroES (96 aa).

It belongs to the GroES chaperonin family. In terms of assembly, heptamer of 7 subunits arranged in a ring. Interacts with the chaperonin GroEL.

Its subcellular location is the cytoplasm. In terms of biological role, together with the chaperonin GroEL, plays an essential role in assisting protein folding. The GroEL-GroES system forms a nano-cage that allows encapsulation of the non-native substrate proteins and provides a physical environment optimized to promote and accelerate protein folding. GroES binds to the apical surface of the GroEL ring, thereby capping the opening of the GroEL channel. This is Co-chaperonin GroES from Methylobacillus flagellatus (strain ATCC 51484 / DSM 6875 / VKM B-1610 / KT).